The chain runs to 847 residues: MDIRNEFLQFFQNKGHAVYPSMPLVPNDATLLFTNAGMVQFKDIFTGIVPHPSIPRATSSQLCMRAGGKHNDLENVGYTARHHTLFEMLGNFSFGDYFKEEAILFAWEFVTKNLGFKPKDLYISVHEKDDEAVKLWEKFVPVDRIKKMGDKDNFWQMGDSGPCGPCSEIYIDQGEKHFKGSEDYFGGEGDRFLEIWNLVFMQYERSNDGVLSPLPKPSIDTGMGLERVQALLEHKLNNFDSSLFAPLMEEISELTSLDYTSEFQPSFRVVADHARAVAFLLAQGVHFNKEGRGYVLRRILRRALRHGYLMGLKEAFLYKVVGVVCEQFSNTHAYLKESKEMVMKECFEEEERFLETLESGMELFNLSLKHLNENKIFDGKIAFKLYDTFGFPLDLTNDMLRSHGACVDMQGFELCMQEQVKRSKASWKGKQDNADFSAILNAYAPNEFVGYETTECPAKALGFFDSDFKEIIEANPNQEVWVLLEKTPFYAEGGGAIGDRGALFKDNEEAAIVLDTKNFFGLNFSLLEIKKALKKGDQVIAQVSDERLEIAKHHSATHLLQSALREVLGSHVSQAGSLVESKRLRFDFSHPKVLNDEELEKVEDLVNAQIFKHLNSHVEHMPLNQAKDKGALALFGEKYAENVRVVSFKEASIELCGGIHVENTGLIGGFRIVKESGVSSGVRRIEAVCGKAFYQLAKEESKELKNAKTLLKNNDVIAGINKLKESVKNSQKAPVSVDLPVEKIHGVNLVVGVVEQGDIKEMIDRLKSKHERLLAMVFKKENERITLACGVKNAPIKANVWANEVAQILGGKGGGRDDFASAGGKDIENLQAALNLAKNTALKALEG.

Histidine 554, histidine 558, cysteine 656, and histidine 660 together coordinate Zn(2+).

This sequence belongs to the class-II aminoacyl-tRNA synthetase family. Zn(2+) is required as a cofactor.

Its subcellular location is the cytoplasm. The catalysed reaction is tRNA(Ala) + L-alanine + ATP = L-alanyl-tRNA(Ala) + AMP + diphosphate. Functionally, catalyzes the attachment of alanine to tRNA(Ala) in a two-step reaction: alanine is first activated by ATP to form Ala-AMP and then transferred to the acceptor end of tRNA(Ala). Also edits incorrectly charged Ser-tRNA(Ala) and Gly-tRNA(Ala) via its editing domain. The sequence is that of Alanine--tRNA ligase from Helicobacter pylori (strain HPAG1).